The chain runs to 422 residues: Glucuronoxylanase XynC (422 aa).

Residues 1-32 (MIPRIKKTICVLLVCFTMLSVMLGPGATEVLA) form the signal peptide. Catalysis depends on E171, which acts as the Proton donor. The active-site Nucleophile is E260.

Belongs to the glycosyl hydrolase 30 family.

The protein resides in the secreted. The catalysed reaction is Endohydrolysis of (1-&gt;4)-beta-D-xylosyl links in some glucuronoarabinoxylans.. It participates in glycan degradation; xylan degradation. Functionally, catalyzes the depolymerization of methylglucuronoxylan (MeGAXn) from different sources. It cleaves the beta-1,4-xylosidic bond penultimate to that linking carbon one of the xylose residue substituted with alpha-1,2-linked 4-O-methyl-D-glucuronate (MeGA). The protein is Glucuronoxylanase XynC (xynC) of Bacillus subtilis (strain 168).